The sequence spans 72 residues: Gas vesicle protein A (72 aa).

Belongs to the gas vesicle GvpA family. The gas vesicle shell is 2 nm thick and consists of a single layer of this protein. It forms helical ribs nearly perpendicular to the long axis of the vesicle.

The protein resides in the gas vesicle shell. Gas vesicles are hollow, gas filled proteinaceous nanostructures found in some microorganisms. During planktonic growth they allow positioning of the organism at a favorable depth for light or nutrient acquisition. GvpA forms the protein shell. This is Gas vesicle protein A from Synechococcus sp. (strain JA-3-3Ab) (Cyanobacteria bacterium Yellowstone A-Prime).